The primary structure comprises 54 residues: Ovomucoid (54 aa).

One can recognise a Kazal-like domain in the interval 4-54; it reads VDCSDYPKPVCSLDYMPLCGSDNTTYNNKCIFCNAVVDSNGTITLSHFGKC. 3 cysteine pairs are disulfide-bonded: C6–C36, C14–C33, and C22–C54. N43 carries an N-linked (GlcNAc...) asparagine glycan.

The protein resides in the secreted. This chain is Ovomucoid, found in Haemorhous mexicanus (House finch).